A 176-amino-acid chain; its full sequence is Prepronociceptin (176 aa).

The N-terminal stretch at 1-19 (MKVLLCDLLLLSLFSSVFS) is a signal peptide. Propeptides lie at residues 20 to 95 (SCQR…MQHL) and 169 to 176 (TLHQNGNV).

Belongs to the opioid neuropeptide precursor family. In terms of processing, specific enzymatic cleavages at paired basic residues probably yield other active peptides besides nociceptin. Post-translationally, the N-terminal domain contains 6 conserved cysteines thought to be involved in disulfide bonding and/or processing. In terms of tissue distribution, predominantly expressed in the brain and spinal cord. Also expressed and secreted by peripheral blood neutrophils following degranulation.

The protein localises to the secreted. In terms of biological role, ligand of the opioid receptor-like receptor OPRL1. It may act as a transmitter in the brain by modulating nociceptive and locomotor behavior. May be involved in neuronal differentiation and development. Its function is as follows. Blocks nociceptin action in pain transmission by inhibiting nociceptin-induced hyperalgesia and allodynia. Functionally, has potent analgesic activity. The protein is Prepronociceptin (PNOC) of Homo sapiens (Human).